The following is a 630-amino-acid chain: MALVSSAPKSCLHKSLIRSTHHELKPLRRTIPTLGMCRRGKSFTPSVSMSLTTAVSDDGLQRRIGDYHSNLWDDDFIQSLSTPYGEPSYRERAEKLIGEVKEMFNSMPSEDGESMSPLNDLIERLWMVDSVERLGIDRHFKKEIKSALDYVYSYWNEKGIGCGRDSVFPDVNSTASGFRTLRLHGYSVSSEVLKVFQDQNGQFAFSPSTKERDIRTVLNLYRASFIAFPGEKVMEEAEIFSSRYLKEAVQKIPVSSLSQEIDYTLEYGWHTNMPRLETRNYLDVFGHPTSPWLKKKRTQYLDSEKLLELAKLEFNIFHSLQQKELQYLSRWWIHSGLPELTFGRHRHVEYYTLSSCIATEPKHSAFRLGFAKTCHLITVLDDIYDTFGTMDEIELFNEAVRRWNPSEKERLPEYMKEIYMALYEALTDMAREAEKTQGRDTLNYARKAWEVYLDSYTQEAKWIASGYLPTFEEYLENAKVSSGHRAAALTPLLTLDVPLPDDVLKGIDFPSRFNDLASSFLRLRGDTRCYKADRDRGEEASSISCYMKDNPGLTEEDALNHINAMINDIIKELNWELLKPDSNIPMTARKHAYEITRAFHQLYKYRDGFSVATQETKSLVRRTVLEPVPL.

The N-terminal 48 residues, 1–48 (MALVSSAPKSCLHKSLIRSTHHELKPLRRTIPTLGMCRRGKSFTPSVS), are a transit peptide targeting the chloroplast. Asp-381, Asp-385, and Asp-533 together coordinate Mg(2+). Positions 381 to 385 (DDIYD) match the DDXXD motif motif.

It belongs to the terpene synthase family. Tpsd subfamily. Mg(2+) is required as a cofactor. The cofactor is Mn(2+). It depends on K(+) as a cofactor.

Its subcellular location is the plastid. The protein resides in the chloroplast. The enzyme catalyses (2E)-geranyl diphosphate = (-)-beta-phellandrene + diphosphate. It participates in terpene metabolism; oleoresin biosynthesis. In terms of biological role, converts geranyl diphosphate to four products with (-)-(4S)-beta-phellandrene (52%) as the major olefin, and lesser amounts of (-)-(1S,5S)-beta-pinene (34%), (-)-1S,5S-alpha-pinene (8.5%), and (-)-(4S)-limonene (6%). Involved in defensive oleoresin formation in conifers in response to insect attack or other injury. Involved in monoterpene (C10) olefins biosynthesis. This chain is Beta-phellandrene synthase, chloroplastic (ag8), found in Abies grandis (Grand fir).